We begin with the raw amino-acid sequence, 316 residues long: Carbamate kinase-like protein YahI (316 aa).

This sequence belongs to the carbamate kinase family.

In Escherichia coli (strain K12), this protein is Carbamate kinase-like protein YahI (yahI).